The following is an 855-amino-acid chain: Inactive rhomboid protein 1 (855 aa).

The tract at residues Met1–Ser36 is disordered. Topologically, residues Met1–Thr411 are cytoplasmic. Residues Ser76 and Ser176 each carry the phosphoserine modification. 2 positions are modified to phosphothreonine: Thr180 and Thr183. Ser390 is subject to Phosphoserine. A helical membrane pass occupies residues Phe412 to Phe432. At Ser433–Arg655 the chain is on the lumenal side. An N-linked (GlcNAc...) asparagine glycan is attached at Asn583. The chain crosses the membrane as a helical span at residues Leu656–Gln676. Over Met677 to Arg691 the chain is Cytoplasmic. Residues Ile692–Pro712 form a helical membrane-spanning segment. Topologically, residues Tyr713–Arg714 are lumenal. The chain crosses the membrane as a helical span at residues Ala715–Phe735. Residues Gln736 to Arg746 lie on the Cytoplasmic side of the membrane. The helical transmembrane segment at Ala747 to Ile767 threads the bilayer. The Lumenal portion of the chain corresponds to Asp768–His772. The chain crosses the membrane as a helical span at residues Ile773 to Gly793. Topologically, residues Lys794 to Gln803 are cytoplasmic. Residues Ile804–Phe824 traverse the membrane as a helical segment. The Lumenal portion of the chain corresponds to Tyr825–His855.

This sequence belongs to the peptidase S54 family. Homodimer, or homooligomer. Interacts with TGFA and HBEGF. Interacts with EGF; may retain EGF in the endoplasmic reticulum and regulates its degradation through the endoplasmic reticulum-associated degradation (ERAD). Interacts (via cytoplasmic N-terminus) with FRMD8/iTAP; this interaction leads to mutual protein stabilization. Interacts with ADAM17/TACE.

Its subcellular location is the endoplasmic reticulum membrane. The protein resides in the golgi apparatus membrane. Its function is as follows. Regulates ADAM17 protease, a sheddase of the epidermal growth factor (EGF) receptor ligands and TNF, thereby plays a role in sleep, cell survival, proliferation, migration and inflammation. Does not exhibit any protease activity on its own. In Papio anubis (Olive baboon), this protein is Inactive rhomboid protein 1 (RHBDF1).